A 369-amino-acid chain; its full sequence is Aspartate-semialdehyde dehydrogenase (369 aa).

Residues 11–14 (RGMV), 38–39 (TS), and Gln75 contribute to the NADP(+) site. Position 104 (Arg104) interacts with phosphate. Cys137 acts as the Acyl-thioester intermediate in catalysis. Gln164 contacts substrate. Residues 167–168 (SG) and Pro195 each bind NADP(+). Glu243 contacts substrate. A phosphate-binding site is contributed by Lys246. Arg269 lines the substrate pocket. The active-site Proton acceptor is His276. Gln352 lines the NADP(+) pocket.

This sequence belongs to the aspartate-semialdehyde dehydrogenase family. As to quaternary structure, homodimer.

It carries out the reaction L-aspartate 4-semialdehyde + phosphate + NADP(+) = 4-phospho-L-aspartate + NADPH + H(+). Its pathway is amino-acid biosynthesis; L-lysine biosynthesis via DAP pathway; (S)-tetrahydrodipicolinate from L-aspartate: step 2/4. It participates in amino-acid biosynthesis; L-methionine biosynthesis via de novo pathway; L-homoserine from L-aspartate: step 2/3. It functions in the pathway amino-acid biosynthesis; L-threonine biosynthesis; L-threonine from L-aspartate: step 2/5. In terms of biological role, catalyzes the NADPH-dependent formation of L-aspartate-semialdehyde (L-ASA) by the reductive dephosphorylation of L-aspartyl-4-phosphate. The protein is Aspartate-semialdehyde dehydrogenase of Buchnera aphidicola subsp. Baizongia pistaciae (strain Bp).